The sequence spans 354 residues: 3-isopropylmalate dehydrogenase (354 aa).

76–87 (GPRWDGAKERPE) serves as a coordination point for NAD(+). Substrate contacts are provided by Arg-94, Arg-104, Arg-130, and Asp-215. Asp-215, Asp-239, and Asp-243 together coordinate Mg(2+). An NAD(+)-binding site is contributed by 273–285 (GSAPDIAGKNKAN).

It belongs to the isocitrate and isopropylmalate dehydrogenases family. LeuB type 1 subfamily. As to quaternary structure, homodimer. Requires Mg(2+) as cofactor. The cofactor is Mn(2+).

It localises to the cytoplasm. The enzyme catalyses (2R,3S)-3-isopropylmalate + NAD(+) = 4-methyl-2-oxopentanoate + CO2 + NADH. The protein operates within amino-acid biosynthesis; L-leucine biosynthesis; L-leucine from 3-methyl-2-oxobutanoate: step 3/4. Catalyzes the oxidation of 3-carboxy-2-hydroxy-4-methylpentanoate (3-isopropylmalate) to 3-carboxy-4-methyl-2-oxopentanoate. The product decarboxylates to 4-methyl-2 oxopentanoate. This is 3-isopropylmalate dehydrogenase from Bacillus anthracis.